The chain runs to 636 residues: Alpha-L-iduronidase (636 aa).

Positions 1-16 (MLSLLLVLTTLARIHA) are cleaved as a signal peptide. Alpha-D-mannopyranose is bound by residues proline 39, isoleucine 43, and histidine 45. Alpha-L-iduronate is bound by residues histidine 78, asparagine 169, and glutamate 170. Glutamate 170 acts as the Proton donor in catalysis. Asparagine 180 carries N-linked (GlcNAc...) asparagine glycosylation. Lysine 257 serves as a coordination point for alpha-L-iduronate. N-linked (GlcNAc...) asparagine glycosylation is present at asparagine 268. Residues glutamate 293 and glycine 299 each contribute to the alpha-L-iduronate site. Glutamate 293 serves as the catalytic Nucleophile. Tryptophan 300 contacts alpha-D-mannopyranose. Aspartate 342 and arginine 356 together coordinate alpha-L-iduronate. 4 N-linked (GlcNAc...) asparagine glycosylation sites follow: asparagine 365, asparagine 448, asparagine 453, and asparagine 483. Cysteine 529 and cysteine 565 are disulfide-bonded. Asparagine 622 carries N-linked (GlcNAc...) asparagine glycosylation.

Belongs to the glycosyl hydrolase 39 family.

It is found in the lysosome. The catalysed reaction is Hydrolysis of unsulfated alpha-L-iduronosidic linkages in dermatan sulfate.. Essential lysosomal hydrolase responsible for the degradation of glycosaminoglycans (GAG) such as heparan sulfate. Required for lysosome function and autophagy. Consequently, has an essential role in the development, maintenance and function of various cells, tissues, and organs, including the muscles and the central nervous system (CNS). This is Alpha-L-iduronidase from Drosophila melanogaster (Fruit fly).